Here is a 335-residue protein sequence, read N- to C-terminus: Glycerol-3-phosphate dehydrogenase [NAD(P)+] (335 aa).

NADPH is bound by residues Ser12, Trp13, Arg33, Arg34, and Lys107. Sn-glycerol 3-phosphate contacts are provided by Lys107, Gly134, and Ser136. Ala138 provides a ligand contact to NADPH. 5 residues coordinate sn-glycerol 3-phosphate: Lys189, Asp242, Ser252, Arg253, and Asn254. Lys189 (proton acceptor) is an active-site residue. An NADPH-binding site is contributed by Arg253. NADPH is bound by residues Val277 and Glu279.

It belongs to the NAD-dependent glycerol-3-phosphate dehydrogenase family.

It localises to the cytoplasm. It catalyses the reaction sn-glycerol 3-phosphate + NAD(+) = dihydroxyacetone phosphate + NADH + H(+). It carries out the reaction sn-glycerol 3-phosphate + NADP(+) = dihydroxyacetone phosphate + NADPH + H(+). The protein operates within membrane lipid metabolism; glycerophospholipid metabolism. Its function is as follows. Catalyzes the reduction of the glycolytic intermediate dihydroxyacetone phosphate (DHAP) to sn-glycerol 3-phosphate (G3P), the key precursor for phospholipid synthesis. The chain is Glycerol-3-phosphate dehydrogenase [NAD(P)+] from Moorella thermoacetica (strain ATCC 39073 / JCM 9320).